The sequence spans 325 residues: MTLGDRLGLILIHPAVTTVPGLLEAKKLELSKKNYVIGDQFLINKLNDNSVTLEKDKYDLIYYLTPEKVEDIKFPVKLIPVIQSALKTNGSFYGLTEAFKVDALVNGFEIVSVEDNDYHWIKKAGSANANVVQLKTKKKLGNEVKSGKLPTFKSKLPTFKKKDAGNNEQVVKLSVEDVEDDLDDDPEVSNELLSKAKFFNSLSLNQDAEIDENNLIKSTDGDGITMITCGKTNTKKRRACKDCTCGMKELEEEEIDNIRTQQDKVVQFTSEELTEIDFTIEGKLVGGCGSCSLGDAFRCSGCPYLGLPAFKPGQPISLSSISDDL.

An N-terminal SAM-like domain region spans residues 1 to 169 (MTLGDRLGLI…KKKDAGNNEQ (169 aa)). Residues 170-222 (VVKLSVEDVEDDLDDDPEVSNELLSKAKFFNSLSLNQDAEIDENNLIKSTDGD) are linker. [2Fe-2S] cluster contacts are provided by Cys-229, Cys-240, Cys-243, and Cys-245. Residues 229 to 245 (CGKTNTKKRRACKDCTC) are fe-S binding site A. [4Fe-4S] cluster is bound by residues Cys-288, Cys-291, Cys-299, and Cys-302. Short sequence motifs (cx2C motif) lie at residues 288-291 (CGSC) and 299-302 (CSGC). The interval 288 to 302 (CGSCSLGDAFRCSGC) is fe-S binding site B.

It belongs to the anamorsin family. Monomer. Interacts with TAH18. Interacts with MIA40. [2Fe-2S] cluster is required as a cofactor. Requires [4Fe-4S] cluster as cofactor.

It is found in the cytoplasm. Its subcellular location is the mitochondrion intermembrane space. Functionally, component of the cytosolic iron-sulfur (Fe-S) protein assembly (CIA) machinery required for the maturation of extramitochondrial Fe-S proteins. Part of an electron transfer chain functioning in an early step of cytosolic Fe-S biogenesis, facilitating the de novo assembly of a [4Fe-4S] cluster on the scaffold complex CFD1-NBP35. Electrons are transferred to DRE2 from NADPH via the FAD- and FMN-containing protein TAH18. TAH18-DRE2 are also required for the assembly of the diferric tyrosyl radical cofactor of ribonucleotide reductase (RNR), probably by providing electrons for reduction during radical cofactor maturation in the catalytic small subunit RNR2. The protein is Fe-S cluster assembly protein DRE2 of Vanderwaltozyma polyspora (strain ATCC 22028 / DSM 70294 / BCRC 21397 / CBS 2163 / NBRC 10782 / NRRL Y-8283 / UCD 57-17) (Kluyveromyces polysporus).